We begin with the raw amino-acid sequence, 118 residues long: Small ribosomal subunit protein uS13 (118 aa).

Residues 94–118 (SLPLRGQRTKTNARTRKGPRKPIRK) form a disordered region.

Belongs to the universal ribosomal protein uS13 family. As to quaternary structure, part of the 30S ribosomal subunit. Forms a loose heterodimer with protein S19. Forms two bridges to the 50S subunit in the 70S ribosome.

Its function is as follows. Located at the top of the head of the 30S subunit, it contacts several helices of the 16S rRNA. In the 70S ribosome it contacts the 23S rRNA (bridge B1a) and protein L5 of the 50S subunit (bridge B1b), connecting the 2 subunits; these bridges are implicated in subunit movement. Contacts the tRNAs in the A and P-sites. This is Small ribosomal subunit protein uS13 from Shewanella denitrificans (strain OS217 / ATCC BAA-1090 / DSM 15013).